A 301-amino-acid chain; its full sequence is Probable alpha-L-glutamate ligase (301 aa).

Residues 104–287 (LQLLSRRGIG…VAGMIIGYLE (184 aa)) form the ATP-grasp domain. Residues K141, 178–179 (EY), D187, and 211–213 (RSN) contribute to the ATP site. Residues D248, E260, and N262 each contribute to the Mg(2+) site. Residues D248, E260, and N262 each contribute to the Mn(2+) site.

Belongs to the RimK family. It depends on Mg(2+) as a cofactor. Requires Mn(2+) as cofactor.

This Pseudomonas syringae pv. syringae (strain B728a) protein is Probable alpha-L-glutamate ligase.